We begin with the raw amino-acid sequence, 267 residues long: Orotidine 5'-phosphate decarboxylase (267 aa).

Residue Lys93 is the Proton donor of the active site.

Belongs to the OMP decarboxylase family. Type 2 subfamily.

The enzyme catalyses orotidine 5'-phosphate + H(+) = UMP + CO2. It participates in pyrimidine metabolism; UMP biosynthesis via de novo pathway; UMP from orotate: step 2/2. The protein is Orotidine 5'-phosphate decarboxylase of Herpetosiphon aurantiacus (strain ATCC 23779 / DSM 785 / 114-95).